Consider the following 1406-residue polypeptide: DNA-directed RNA polymerase subunit beta' (1406 aa).

Zn(2+) is bound by residues Cys70, Cys72, Cys85, and Cys88. Positions 460, 462, and 464 each coordinate Mg(2+). The Zn(2+) site is built by Cys814, Cys888, Cys895, and Cys898.

Belongs to the RNA polymerase beta' chain family. In terms of assembly, the RNAP catalytic core consists of 2 alpha, 1 beta, 1 beta' and 1 omega subunit. When a sigma factor is associated with the core the holoenzyme is formed, which can initiate transcription. Mg(2+) serves as cofactor. The cofactor is Zn(2+).

It carries out the reaction RNA(n) + a ribonucleoside 5'-triphosphate = RNA(n+1) + diphosphate. DNA-dependent RNA polymerase catalyzes the transcription of DNA into RNA using the four ribonucleoside triphosphates as substrates. The sequence is that of DNA-directed RNA polymerase subunit beta' from Yersinia enterocolitica serotype O:8 / biotype 1B (strain NCTC 13174 / 8081).